An 85-amino-acid chain; its full sequence is Large ribosomal subunit protein bL27 (85 aa).

Belongs to the bacterial ribosomal protein bL27 family.

The sequence is that of Large ribosomal subunit protein bL27 from Campylobacter fetus subsp. fetus (strain 82-40).